A 318-amino-acid chain; its full sequence is 2-dehydro-3-deoxygalactonokinase (318 aa).

Residues 35–39 (GAESN), Tyr90, 105–107 (YDR), and Arg169 contribute to the substrate site. ATP contacts are provided by residues 167 to 169 (NYR), 228 to 233 (TRGEDG), and 257 to 260 (GTGD). Positions 260 and 296 each coordinate substrate. Asp260 acts as the Proton acceptor in catalysis.

Belongs to the carbohydrate kinase PfkB family. As to quaternary structure, homohexamer.

The catalysed reaction is 2-dehydro-3-deoxy-D-galactonate + ATP = 2-dehydro-3-deoxy-6-phospho-D-galactonate + ADP + H(+). In terms of biological role, involved in galactose catabolism. Catalyzes the phosphorylation of 2-keto-3-deoxygalactonate (KDGal) to produce 2-keto-3-deoxy-6-phosphogalactonate (KDPGal). Can also phosphorylate 2-keto-3-deoxygluconate (KDG) to 2-keto-3-deoxy-6-phosphogluconate (KDPG), but the catalytic efficiency for KDGal is 50-fold higher than for KDG. This Haloferax volcanii (strain ATCC 29605 / DSM 3757 / JCM 8879 / NBRC 14742 / NCIMB 2012 / VKM B-1768 / DS2) (Halobacterium volcanii) protein is 2-dehydro-3-deoxygalactonokinase.